A 317-amino-acid polypeptide reads, in one-letter code: L-lactate dehydrogenase (317 aa).

Positions 16, 37, and 68 each coordinate NAD(+). Substrate-binding positions include Q85, R91, 123 to 126 (NPCD), and 151 to 154 (DSAR). 121–123 (ASN) serves as a coordination point for NAD(+). The Proton acceptor role is filled by H178. Y222 bears the Phosphotyrosine mark. A substrate-binding site is contributed by T231.

Belongs to the LDH/MDH superfamily. LDH family. In terms of assembly, homotetramer.

The protein localises to the cytoplasm. It catalyses the reaction (S)-lactate + NAD(+) = pyruvate + NADH + H(+). It functions in the pathway fermentation; pyruvate fermentation to lactate; (S)-lactate from pyruvate: step 1/1. Catalyzes the conversion of lactate to pyruvate. The chain is L-lactate dehydrogenase from Mesoplasma florum (strain ATCC 33453 / NBRC 100688 / NCTC 11704 / L1) (Acholeplasma florum).